A 660-amino-acid chain; its full sequence is Bifunctional polymyxin resistance protein ArnA (660 aa).

The tract at residues 1 to 304 (MKAVIFAYHD…TLGLVAGARL (304 aa)) is formyltransferase ArnAFT. Catalysis depends on H104, which acts as the Proton donor; for formyltransferase activity. Residues R114 and 136-140 (VKRAD) each bind (6R)-10-formyltetrahydrofolate. The interval 314–660 (RRIRVLILGV…RSVDIAERAS (347 aa)) is dehydrogenase ArnADH. NAD(+) contacts are provided by residues D347 and 368 to 369 (DI). UDP-alpha-D-glucuronate-binding positions include A393, Y398, and 432-433 (TS). Residue E434 is the Proton acceptor; for decarboxylase activity of the active site. UDP-alpha-D-glucuronate-binding positions include R460, N492, 526–535 (KLIDGGQQKR), and Y613. R619 serves as the catalytic Proton donor; for decarboxylase activity.

It in the N-terminal section; belongs to the Fmt family. UDP-L-Ara4N formyltransferase subfamily. This sequence in the C-terminal section; belongs to the NAD(P)-dependent epimerase/dehydratase family. UDP-glucuronic acid decarboxylase subfamily. As to quaternary structure, homohexamer, formed by a dimer of trimers.

The catalysed reaction is UDP-alpha-D-glucuronate + NAD(+) = UDP-beta-L-threo-pentopyranos-4-ulose + CO2 + NADH. It catalyses the reaction UDP-4-amino-4-deoxy-beta-L-arabinose + (6R)-10-formyltetrahydrofolate = UDP-4-deoxy-4-formamido-beta-L-arabinose + (6S)-5,6,7,8-tetrahydrofolate + H(+). It participates in nucleotide-sugar biosynthesis; UDP-4-deoxy-4-formamido-beta-L-arabinose biosynthesis; UDP-4-deoxy-4-formamido-beta-L-arabinose from UDP-alpha-D-glucuronate: step 1/3. The protein operates within nucleotide-sugar biosynthesis; UDP-4-deoxy-4-formamido-beta-L-arabinose biosynthesis; UDP-4-deoxy-4-formamido-beta-L-arabinose from UDP-alpha-D-glucuronate: step 3/3. It functions in the pathway bacterial outer membrane biogenesis; lipopolysaccharide biosynthesis. Its function is as follows. Bifunctional enzyme that catalyzes the oxidative decarboxylation of UDP-glucuronic acid (UDP-GlcUA) to UDP-4-keto-arabinose (UDP-Ara4O) and the addition of a formyl group to UDP-4-amino-4-deoxy-L-arabinose (UDP-L-Ara4N) to form UDP-L-4-formamido-arabinose (UDP-L-Ara4FN). The modified arabinose is attached to lipid A and is required for resistance to polymyxin and cationic antimicrobial peptides. This is Bifunctional polymyxin resistance protein ArnA from Salmonella schwarzengrund (strain CVM19633).